The sequence spans 438 residues: GTPase Der (438 aa).

2 consecutive EngA-type G domains span residues 4–168 and 177–352; these read PIVA…PEGN and IRIA…GNYC. GTP contacts are provided by residues 10–17, 57–61, 120–123, 183–190, 230–234, and 295–298; these read GRPNVGKS, DTGGI, NKID, DTAGL, and NKWD. The KH-like domain maps to 353–437; it reads KRIKTGILND…GIKLEFRERK (85 aa).

It belongs to the TRAFAC class TrmE-Era-EngA-EngB-Septin-like GTPase superfamily. EngA (Der) GTPase family. In terms of assembly, associates with the 50S ribosomal subunit.

Its function is as follows. GTPase that plays an essential role in the late steps of ribosome biogenesis. The sequence is that of GTPase Der from Clostridium novyi (strain NT).